The sequence spans 65 residues: Large ribosomal subunit protein bL33c (65 aa).

This sequence belongs to the bacterial ribosomal protein bL33 family.

Its subcellular location is the plastid. The protein localises to the chloroplast. The protein is Large ribosomal subunit protein bL33c of Chara vulgaris (Common stonewort).